A 59-amino-acid polypeptide reads, in one-letter code: SPbeta prophage-derived uncharacterized protein YosB (59 aa).

The protein is SPbeta prophage-derived uncharacterized protein YosB (yosB) of Bacillus subtilis (strain 168).